We begin with the raw amino-acid sequence, 153 residues long: Nucleoside diphosphate kinase (153 aa).

The ATP site is built by lysine 9, phenylalanine 57, arginine 85, threonine 91, arginine 102, and asparagine 112. The Pros-phosphohistidine intermediate role is filled by histidine 115.

It belongs to the NDK family. In terms of assembly, homotetramer. Mg(2+) is required as a cofactor.

The protein localises to the cytoplasm. The enzyme catalyses a 2'-deoxyribonucleoside 5'-diphosphate + ATP = a 2'-deoxyribonucleoside 5'-triphosphate + ADP. It carries out the reaction a ribonucleoside 5'-diphosphate + ATP = a ribonucleoside 5'-triphosphate + ADP. Functionally, major role in the synthesis of nucleoside triphosphates other than ATP. The ATP gamma phosphate is transferred to the NDP beta phosphate via a ping-pong mechanism, using a phosphorylated active-site intermediate. The polypeptide is Nucleoside diphosphate kinase (Parabacteroides distasonis (strain ATCC 8503 / DSM 20701 / CIP 104284 / JCM 5825 / NCTC 11152)).